A 69-amino-acid polypeptide reads, in one-letter code: DNA-directed RNA polymerase subunit epsilon (69 aa).

The protein belongs to the RNA polymerase subunit epsilon family. As to quaternary structure, monomer. RNAP is composed of a core of 2 alpha, a beta and a beta' subunit. The core is associated with a delta subunit, and at least one of epsilon or omega. When a sigma factor is associated with the core the holoenzyme is formed, which can initiate transcription.

Its subcellular location is the cytoplasm. It is found in the nucleoid. The enzyme catalyses RNA(n) + a ribonucleoside 5'-triphosphate = RNA(n+1) + diphosphate. Its function is as follows. A non-essential component of RNA polymerase (RNAP). Has a similar structure to bacteriophage T7 protein Gp2 (AC P03704), which is known to bind to RNAP in the DNA binding-cleft. Unlike Gp2 however, this protein does not inhibit transcription initiation. In vitro reconstitution experiments show this subunit is dispensible. The chain is DNA-directed RNA polymerase subunit epsilon from Bacillus subtilis (strain 168).